The following is a 224-amino-acid chain: MYAVKEVKGMDGVFIMNNSLLTINPNPGVKVYGERIIDWGGREYRVWDPRRSKLAAAILNGLRGFSLNSDSRVLYLGASAGTTASHISDIVTDGRVYCIEFSPRMMRELLGVCESRKNMAPLLEDASRPLSYLRMVEAADLVYCDVAQPDQTRLFIENMDCFLKRDGYGLIMIKARSIDVTRSPRKIFREEVGKLESSGFRIIDQVGLNPYEKDHMAVLVKRDV.

S-adenosyl-L-methionine-binding positions include 82 to 83 (TT), 100 to 101 (EF), 125 to 126 (DA), and 145 to 148 (DVAQ).

Belongs to the methyltransferase superfamily. Fibrillarin family. In terms of assembly, interacts with nop5. Component of box C/D small ribonucleoprotein (sRNP) particles that contain rpl7ae, FlpA and nop5, plus a guide RNA.

In terms of biological role, involved in pre-rRNA and tRNA processing. Utilizes the methyl donor S-adenosyl-L-methionine to catalyze the site-specific 2'-hydroxyl methylation of ribose moieties in rRNA and tRNA. Site specificity is provided by a guide RNA that base pairs with the substrate. Methylation occurs at a characteristic distance from the sequence involved in base pairing with the guide RNA. The protein is Fibrillarin-like rRNA/tRNA 2'-O-methyltransferase of Methanothermobacter thermautotrophicus (strain ATCC 29096 / DSM 1053 / JCM 10044 / NBRC 100330 / Delta H) (Methanobacterium thermoautotrophicum).